A 415-amino-acid chain; its full sequence is MENLIEKLKKAKVSSYTLALLNTNEKNEALRAIANNIEKNIDKIIKENEKDLKRGEEKGLSKAVLDRILLNEKRLRDIIKSIDDVIKLPDPVGEIVSMQKRPNGILVGQMRVPIGVIAIIYEARPNVTVDATILALKSGNAIVLRGSSDALNSNIIITEIMKEALSNTKVPPDTVQIIESPEHSVVEELLQMVDYIDVAIPRGSAKFIKHVMNISKVPVIETGAGNNHIYVEEDADFEMARKIIINAKVQRPSVCNAIEKLLIHKNIAEEFLPIIAKDLREYNVEIRGCKRTLKILTDAIPATEEDWYTEYLDYIIAIKIVESIDEAIEHINKYNTKHSEAIITKDYYKALKFLRMVDAAAVYVNASTRFTDGGEFGLGAEIGISTQKLHARGPMGLKELTTTKYVILGEGQIRE.

Belongs to the gamma-glutamyl phosphate reductase family.

It is found in the cytoplasm. The enzyme catalyses L-glutamate 5-semialdehyde + phosphate + NADP(+) = L-glutamyl 5-phosphate + NADPH + H(+). It participates in amino-acid biosynthesis; L-proline biosynthesis; L-glutamate 5-semialdehyde from L-glutamate: step 2/2. Catalyzes the NADPH-dependent reduction of L-glutamate 5-phosphate into L-glutamate 5-semialdehyde and phosphate. The product spontaneously undergoes cyclization to form 1-pyrroline-5-carboxylate. The protein is Gamma-glutamyl phosphate reductase of Dictyoglomus turgidum (strain DSM 6724 / Z-1310).